The chain runs to 603 residues: UvrABC system protein C (603 aa).

The 78-residue stretch at 15–92 (DQPGCYLMKD…IKKHDPRFNI (78 aa)) folds into the GIY-YIG domain. The 36-residue stretch at 197–232 (KTVKNDLMKKMQEAAENMEFEKAGEFRDQINAIETT) folds into the UVR domain.

The protein belongs to the UvrC family. Interacts with UvrB in an incision complex.

It is found in the cytoplasm. The UvrABC repair system catalyzes the recognition and processing of DNA lesions. UvrC both incises the 5' and 3' sides of the lesion. The N-terminal half is responsible for the 3' incision and the C-terminal half is responsible for the 5' incision. The chain is UvrABC system protein C from Listeria innocua serovar 6a (strain ATCC BAA-680 / CLIP 11262).